A 91-amino-acid polypeptide reads, in one-letter code: Small ribosomal subunit protein bS20 (91 aa).

The segment at 1–25 (MANSPSAKKRAKQAEKRRSHNASLR) is disordered. Over residues 7–20 (AKKRAKQAEKRRSH) the composition is skewed to basic residues.

Belongs to the bacterial ribosomal protein bS20 family.

In terms of biological role, binds directly to 16S ribosomal RNA. This chain is Small ribosomal subunit protein bS20, found in Azotobacter vinelandii (strain DJ / ATCC BAA-1303).